Consider the following 1560-residue polypeptide: Tenascin-N (1560 aa).

A signal peptide spans 1-26; it reads MGLWGMLAFPLGFLLASVLLVASAPA. EGF-like domains follow at residues 167 to 198, 199 to 229, and 230 to 260; these read DQPT…VDCA, YAAC…EDCS, and EQRC…PDCS. Intrachain disulfides connect C171–C181, C175–C186, C188–C197, C202–C212, C206–C217, C219–C228, C233–C243, C237–C248, and C250–C259. 12 Fibronectin type-III domains span residues 264–353, 354–444, 445–532, 533–622, 623–706, 709–798, 799–882, 885–970, 973–1062, 1063–1144, 1149–1238, and 1239–1325; these read APQG…DLAV, VGTA…TEID, GPTN…TEID, SPEN…IDSP, KNLV…APTD, GPKN…IDSP, GPKN…APTD, SPKN…IDSP, KNLV…TKAP, SPKN…IDPP, and RNLR…VDAR. Disordered regions lie at residues 868–888 and 1044–1063; these read GTQE…GPKN and GARE…DSPK. Residues 1044-1061 show a composition bias toward basic and acidic residues; sequence GARESKKANTEGHTDIDS. Positions 1323–1540 constitute a Fibrinogen C-terminal domain; the sequence is DARFPHPSDC…YVELKIRPFG (218 aa). N1411 carries an N-linked (GlcNAc...) asparagine glycan.

It belongs to the tenascin family. As to quaternary structure, homohexamer. In terms of tissue distribution, highest expression in kidney followed by spleen and brain. In brain, highest expression is found in hippocampus, cerebellum and olfactory bulb. Expressed in aortic valve, corneal limbus. Expressed in ribs periosteum. During a fracture repair process, expression increases in cells of newly formed perichondrium/peristeum surrounding the cartalaginous callus.

Its subcellular location is the secreted. The protein localises to the extracellular space. It localises to the extracellular matrix. Functionally, extracellular matrix protein that seems to be a ligand for ITGA8:ITGB1, ITGAV:ITGB1 and ITGA4:ITGB1. Involved in neurite outgrowth and cell migration in hippocampal explants. During endochondral bone formation, inhibits proliferation and differentiation of proteoblasts mediated by canonical WNT signaling. In tumors, stimulates angiogenesis by elongation, migration and sprouting of endothelial cells. Expressed in most mammary tumors, may facilitate tumorigenesis by supporting the migratory behavior of breast cancer cells. The chain is Tenascin-N from Mus musculus (Mouse).